The following is a 323-amino-acid chain: Transaldolase (323 aa).

K133 (schiff-base intermediate with substrate) is an active-site residue.

This sequence belongs to the transaldolase family. Type 1 subfamily. Monomer.

The catalysed reaction is D-sedoheptulose 7-phosphate + D-glyceraldehyde 3-phosphate = D-erythrose 4-phosphate + beta-D-fructose 6-phosphate. It participates in carbohydrate degradation; pentose phosphate pathway; D-glyceraldehyde 3-phosphate and beta-D-fructose 6-phosphate from D-ribose 5-phosphate and D-xylulose 5-phosphate (non-oxidative stage): step 2/3. Functionally, important for the balance of metabolites in the pentose-phosphate pathway. Involved in xylose fermentation to ethanol. The chain is Transaldolase from Gibberella intermedia (Bulb rot disease fungus).